The sequence spans 185 residues: Ribosome-recycling factor (185 aa).

This sequence belongs to the RRF family.

It is found in the cytoplasm. Functionally, responsible for the release of ribosomes from messenger RNA at the termination of protein biosynthesis. May increase the efficiency of translation by recycling ribosomes from one round of translation to another. The sequence is that of Ribosome-recycling factor from Xanthomonas campestris pv. campestris (strain 8004).